The primary structure comprises 219 residues: Ribose-5-phosphate isomerase A (219 aa).

Substrate is bound by residues 28-31 (SGST), 81-84 (DGAD), and 94-97 (KGGG). The active-site Proton acceptor is Glu103. Lys121 is a substrate binding site.

It belongs to the ribose 5-phosphate isomerase family. As to quaternary structure, homodimer.

The enzyme catalyses aldehydo-D-ribose 5-phosphate = D-ribulose 5-phosphate. Its pathway is carbohydrate degradation; pentose phosphate pathway; D-ribose 5-phosphate from D-ribulose 5-phosphate (non-oxidative stage): step 1/1. Functionally, catalyzes the reversible conversion of ribose-5-phosphate to ribulose 5-phosphate. This is Ribose-5-phosphate isomerase A from Actinobacillus pleuropneumoniae serotype 5b (strain L20).